Consider the following 465-residue polypeptide: UDP-glycosyltransferase TURAN (465 aa).

The Cytoplasmic segment spans residues 1–75 (MGKRGRACVV…FIQYFPKILY (75 aa)). Residues 76-96 (PVTLLLKAFIQFTMLLWFLFV) traverse the membrane as a helical segment. The Lumenal portion of the chain corresponds to 97 to 465 (KVPAPDIFLV…TQVVSQIADS (369 aa)). Asn-238 is a glycosylation site (N-linked (GlcNAc...) asparagine).

Belongs to the glycosyltransferase group 1 family. Glycosyltransferase 33 subfamily.

It is found in the endoplasmic reticulum membrane. It participates in protein modification; protein glycosylation. In terms of biological role, required for pollen tube (PT) growth and integrity by affecting the stability of the pollen-specific ANX1 and ANX2 proteins. Involved in protein N-glycosylation in the endoplasmic reticulum (ER), especially in the female gametophyte. Mediates PT reception in synergids through protein glycosylation. In Arabidopsis thaliana (Mouse-ear cress), this protein is UDP-glycosyltransferase TURAN.